A 282-amino-acid polypeptide reads, in one-letter code: MTKVFINGEFVNEEDAKVSYEDRGYVFGDGIYEYIRAYDGKLFTVKEHFERFLRSAEEIGLDLNYTIEELIELVRRLLKENNVVNGGIYIQATRGAAPRNHSFPTPPVKPVIMAFTKSYDRPYEELEQGVYAITTEDIRWLRCDIKSLNLLGNVLAKEYAVKYNAAEAIQHRGDIVTEGASSNVYAIKDGVIYTHPVNNFILNGITRRVIKWIAEDEQIPFKEEKFTVEFLKSADEVIISSTSAEVMPITKIDGENVQDGQVGTITRQLQQGFEKYIQSHSI.

Tyr-32 is a substrate binding site. Residue Arg-51 participates in pyridoxal 5'-phosphate binding. Arg-99 and His-101 together coordinate substrate. Catalysis depends on Lys-146, which acts as the Proton acceptor. N6-(pyridoxal phosphate)lysine is present on Lys-146. Glu-178 contributes to the pyridoxal 5'-phosphate binding site.

It belongs to the class-IV pyridoxal-phosphate-dependent aminotransferase family. In terms of assembly, homodimer. Pyridoxal 5'-phosphate serves as cofactor.

The catalysed reaction is D-alanine + 2-oxoglutarate = D-glutamate + pyruvate. Acts on the D-isomers of alanine, leucine, aspartate, glutamate, aminobutyrate, norvaline and asparagine. The enzyme transfers an amino group from a substrate D-amino acid to the pyridoxal phosphate cofactor to form pyridoxamine and an alpha-keto acid in the first half-reaction. The second half-reaction is the reverse of the first, transferring the amino group from the pyridoxamine to a second alpha-keto acid to form the product D-amino acid via a ping-pong mechanism. This is an important process in the formation of D-alanine and D-glutamate, which are essential bacterial cell wall components. This is D-alanine aminotransferase (dat) from Staphylococcus epidermidis (strain ATCC 35984 / DSM 28319 / BCRC 17069 / CCUG 31568 / BM 3577 / RP62A).